The following is a 627-amino-acid chain: (-)-alpha-pinene synthase 2, chloroplastic (627 aa).

Residues 1 to 36 (MALVSIAPLASKSCLHKSLSSSAHELKTICRTIPTL) constitute a chloroplast transit peptide. 3 residues coordinate Mg(2+): Asp378, Asp382, and Asp530. Positions 378–382 (DDMYD) match the DDXXD motif motif.

It belongs to the terpene synthase family. Tpsd subfamily. It depends on Mg(2+) as a cofactor. The cofactor is Mn(2+).

The protein resides in the plastid. The protein localises to the chloroplast. It carries out the reaction (2E)-geranyl diphosphate = (1S,5S)-beta-pinene + diphosphate. The catalysed reaction is (2E)-geranyl diphosphate = (1S,5S)-alpha-pinene + diphosphate. It functions in the pathway terpene metabolism; oleoresin biosynthesis. Functionally, terpene synthase (TPS) involved in the biosynthesis of monoterpene natural products included in conifer oleoresin secretions and volatile emissions; these compounds contribute to biotic and abiotic stress defense against herbivores and pathogens. Catalyzes the conversion of (2E)-geranyl diphosphate (GPP) to (1S,5S)-beta-pinene. The polypeptide is (-)-alpha-pinene synthase 2, chloroplastic (Picea glauca (White spruce)).